The following is a 119-amino-acid chain: uncharacterized protein (119 aa).

To Synechocystis PCC 6803 slr0903.

This is an uncharacterized protein from Methanocaldococcus jannaschii (strain ATCC 43067 / DSM 2661 / JAL-1 / JCM 10045 / NBRC 100440) (Methanococcus jannaschii).